A 343-amino-acid polypeptide reads, in one-letter code: NADP-dependent alkenal double bond reductase P2 (343 aa).

2 residues coordinate substrate: Tyr-52 and Tyr-79. NADP(+) contacts are provided by residues 164 to 167 (GAVG), Lys-190, Tyr-206, Asn-230, 252 to 258 (CGMISQY), 282 to 284 (FVV), and Asn-332.

It belongs to the NADP-dependent oxidoreductase L4BD family. In terms of assembly, homodimer.

It catalyses the reaction an n-alkanal + NAD(+) = an alk-2-enal + NADH + H(+). The enzyme catalyses an n-alkanal + NADP(+) = an alk-2-enal + NADPH + H(+). Functionally, catalyzes the reduction of the 7-8 double bond of phenylpropanal substrates, such as p-coumaryl aldehyde and coniferyl aldehyde (in vitro). Has activity towards toxic substrates, such as 4-hydroxy-(2E)-nonenal (in vitro). May play a distinct role in plant antioxidant defense and is possibly involved in NAD(P)/NAD(P)h homeostasis. The polypeptide is NADP-dependent alkenal double bond reductase P2 (P2) (Arabidopsis thaliana (Mouse-ear cress)).